Consider the following 124-residue polypeptide: Pal-related lipoprotein (124 aa).

The first 18 residues, 1 to 18 (MRYRAVFPMLIIVFALSG), serve as a signal peptide directing secretion. C19 carries N-palmitoyl cysteine lipidation. The S-diacylglycerol cysteine moiety is linked to residue C19.

It is found in the cell membrane. This chain is Pal-related lipoprotein (slp), found in Bacillus subtilis (strain 168).